Here is a 314-residue protein sequence, read N- to C-terminus: Homoserine kinase (314 aa).

96 to 106 (PIGSGLGSSAC) serves as a coordination point for ATP.

This sequence belongs to the GHMP kinase family. Homoserine kinase subfamily.

The protein resides in the cytoplasm. The catalysed reaction is L-homoserine + ATP = O-phospho-L-homoserine + ADP + H(+). It functions in the pathway amino-acid biosynthesis; L-threonine biosynthesis; L-threonine from L-aspartate: step 4/5. Catalyzes the ATP-dependent phosphorylation of L-homoserine to L-homoserine phosphate. This chain is Homoserine kinase, found in Mannheimia succiniciproducens (strain KCTC 0769BP / MBEL55E).